Consider the following 493-residue polypeptide: MAENLVNTFVTQVIENSDYEELDRIYLTNKVFTLVGEGVADVETDSSELIDLKDQLLQAGVKAGSVGELNEEQDIIGAQLMDLITPRPSVVNRNFWDTYKSNPEQAIADFYAQSKRNDYVKVKAIAQNIAYKAPTKYGDLEITINLSKPEKDPKAIAAAKNAVASDYPKCQLCMENEGYLGRINHPARSNHRVVRFQMEDKEWGFQYSPYAYFNEHSIFFYGKHEPMHISPLTFGRLLTIVEAFPGYFAGSNADLPIVGGSILTHEHYQGGRHTFPMEVAGIKEKVSFDGYSDVEAGIVNWPMSVLRLRSEDKERLIALATKILNCWRGYSDEKAGVLAESDGQPHHTITPIARRKDGKFELDLVLRDNQTSEEYPDGIYHPHKDVQHIKKENIGLIEVMGLAILPPRLKTELKDVEDYLLGQGNQVAPIHQEWADELKAQNPNITAEEVTEVVRQSVADIFARVLEDAGVYKTNNEGLDQFKAFVDFVNLAD.

This sequence belongs to the galactose-1-phosphate uridylyltransferase type 2 family.

It localises to the cytoplasm. It carries out the reaction alpha-D-galactose 1-phosphate + UDP-alpha-D-glucose = alpha-D-glucose 1-phosphate + UDP-alpha-D-galactose. It functions in the pathway carbohydrate metabolism; galactose metabolism. The chain is Galactose-1-phosphate uridylyltransferase from Streptococcus thermophilus (strain ATCC BAA-250 / LMG 18311).